Consider the following 284-residue polypeptide: MLLLFKNGKLLVKIKWSSKEDEQEVSRKLGKPEALCEARWEALSMSLSRSECTMECVSTSSSSSSSSNTFSKTEDPLRFMSERKNCWLSVSVSSRSLLPGPAAFTPLAKGEAEKSIIELECCIMRLIRWKDVRLCKRQERFKIRLESGNIFWALEYRSQISLFKFKSGSRFGTLFVLIVMFTTVHRVQCIYISIYIYAHAMNRTGEGRKSKGKKTCMLIPGPGVAHTYIYVAGPGTASVRLIVLLLLLLCIVVAVNTSGSCTGTNTMLRCFTSFCYVSACGRTQ.

3 helical membrane-spanning segments follow: residues 174–194, 217–237, and 241–261; these read LFVLIVMFTTVHRVQCIYISI, MLIPGPGVAHTYIYVAGPGTA, and LIVLLLLLLCIVVAVNTSGSC.

It is found in the membrane. This is an uncharacterized protein from Saccharomyces cerevisiae (strain ATCC 204508 / S288c) (Baker's yeast).